Here is a 918-residue protein sequence, read N- to C-terminus: Translation initiation factor IF-2 (918 aa).

The tract at residues 39-321 (DDASEKHLRN…KRDGRMKETT (283 aa)) is disordered. Residues 95-146 (KSSNNESTTRNNNNNKNGNQNRNNTNGRPNNNQNRPNNNRNQNNNRNGNRPN) show a composition bias toward low complexity. Positions 148-158 (PKRDEKQDRIR) are enriched in basic and acidic residues. Residues 159 to 174 (ASVAEAARMAAQANRE) are compositionally biased toward low complexity. Residues 180 to 190 (PQANRQRTNSA) show a composition bias toward polar residues. 3 stretches are compositionally biased toward low complexity: residues 201–231 (NNQNRPNNNNRNGNNVNRTNNNNRPNNNNRN), 237–267 (SRPNNTNQTTNNRPANNTTRPAAPAATTANN), and 278–296 (GRNNNSRGGNRFGNNQNRP). Over residues 302-313 (RKNKKRNRKAKR) the composition is skewed to basic residues. The tr-type G domain occupies 419-588 (SRPPVVTIMG…LLQAEVLELK (170 aa)). Residues 428-435 (GHVDHGKT) are G1. 428–435 (GHVDHGKT) contributes to the GTP binding site. A G2 region spans residues 453 to 457 (GITQG). Residues 474–477 (DTPG) form a G3 region. Residues 474 to 478 (DTPGH) and 528 to 531 (NKID) contribute to the GTP site. Residues 528–531 (NKID) are G4. A G5 region spans residues 564–566 (SAK).

Belongs to the TRAFAC class translation factor GTPase superfamily. Classic translation factor GTPase family. IF-2 subfamily.

The protein resides in the cytoplasm. Its function is as follows. One of the essential components for the initiation of protein synthesis. Protects formylmethionyl-tRNA from spontaneous hydrolysis and promotes its binding to the 30S ribosomal subunits. Also involved in the hydrolysis of GTP during the formation of the 70S ribosomal complex. This chain is Translation initiation factor IF-2, found in Pediococcus pentosaceus (strain ATCC 25745 / CCUG 21536 / LMG 10740 / 183-1w).